The chain runs to 274 residues: Glutamate--cysteine ligase regulatory subunit (274 aa).

Ser59 carries the post-translational modification Phosphoserine. Lys263 is modified (N6-acetyllysine).

The protein belongs to the aldo/keto reductase family. Glutamate--cysteine ligase light chain subfamily. Heterodimer of a catalytic heavy chain and a regulatory light chain. In terms of tissue distribution, most abundant in kidney. Also found in liver and testis.

It participates in sulfur metabolism; glutathione biosynthesis; glutathione from L-cysteine and L-glutamate: step 1/2. This chain is Glutamate--cysteine ligase regulatory subunit (Gclm), found in Rattus norvegicus (Rat).